Reading from the N-terminus, the 258-residue chain is Envelope glycoprotein L (258 aa).

Residues 1 to 31 (MYECMFFSHRLTIGFYIPLIVLTTMSSLSES) form the signal peptide. The region spanning 36 to 243 (QKTACTVAAI…ILYQASLSGP (208 aa)) is the gL betaherpesvirus-type domain. An intrachain disulfide couples cysteine 145 to cysteine 150.

This sequence belongs to the herpesviridae glycoprotein L (gL) family. Betaherpesvirinae gL subfamily. As to quaternary structure, interacts with glycoprotein H (gH); this interaction is necessary for the correct processing and cell surface expression of gH. Forms the envelope pentamer complex (PC) composed of gH, gL, UL128, UL130, and UL131A. The pentamer interacts with host NRP2. Forms the envelope trimer complex composed of gH, gL, and gO. The trimer interacts with host PDGFRA.

It localises to the virion membrane. The protein resides in the host cell membrane. It is found in the host Golgi apparatus. Its subcellular location is the host trans-Golgi network. The heterodimer glycoprotein H-glycoprotein L is required for the fusion of viral and plasma membranes leading to virus entry into the host cell. Acts as a functional inhibitor of gH and maintains gH in an inhibited form. Upon binding to host integrins, gL dissociates from gH leading to activation of the viral fusion glycoproteins gB and gH. In human cytomegalovirus, forms two distincts complexes to mediate viral entry, a trimer and a pentamer at the surface of the virion envelope. The gH-gL-gO trimer is required for infection in fibroblasts by interacting with host PDGFRA. The gH-gL-UL128-UL130-UL131A pentamer is essential for viral entry in epithelial, endothelial and myeloid cells via interaction with host NRP2. The protein is Envelope glycoprotein L of Guinea pig cytomegalovirus (strain 22122) (GPCMV).